A 309-amino-acid polypeptide reads, in one-letter code: Dehydrogenase/reductase SDR family member 7B (309 aa).

The Cytoplasmic segment spans residues 1–4; that stretch reads MDLT. Residues 5–25 form a helical; Signal-anchor for type II membrane protein membrane-spanning segment; the sequence is TWAIFPLLLGSIGVYSLYKLL. Topologically, residues 26-272 are lumenal; it reads QRLRSGAYLQ…AVGERRKELL (247 aa). Positions 46 and 48 each coordinate NAD(+). Serine 178 serves as a coordination point for substrate. Tyrosine 191, lysine 195, and threonine 226 together coordinate NAD(+). The Proton acceptor role is filled by tyrosine 191.

The protein belongs to the short-chain dehydrogenases/reductases (SDR) family.

It is found in the endoplasmic reticulum membrane. Functionally, putative oxidoreductase. This is Dehydrogenase/reductase SDR family member 7B (dhrs7b) from Xenopus tropicalis (Western clawed frog).